A 159-amino-acid polypeptide reads, in one-letter code: NADH-quinone oxidoreductase subunit B (159 aa).

The [4Fe-4S] cluster site is built by Cys36, Cys37, Cys102, and Cys132.

This sequence belongs to the complex I 20 kDa subunit family. NDH-1 is composed of 14 different subunits. Subunits NuoB, C, D, E, F, and G constitute the peripheral sector of the complex. Requires [4Fe-4S] cluster as cofactor.

Its subcellular location is the cell inner membrane. The catalysed reaction is a quinone + NADH + 5 H(+)(in) = a quinol + NAD(+) + 4 H(+)(out). Its function is as follows. NDH-1 shuttles electrons from NADH, via FMN and iron-sulfur (Fe-S) centers, to quinones in the respiratory chain. Couples the redox reaction to proton translocation (for every two electrons transferred, four hydrogen ions are translocated across the cytoplasmic membrane), and thus conserves the redox energy in a proton gradient. This Paracidovorax citrulli (strain AAC00-1) (Acidovorax citrulli) protein is NADH-quinone oxidoreductase subunit B.